We begin with the raw amino-acid sequence, 255 residues long: tRNA pseudouridine synthase A (255 aa).

The active-site Nucleophile is the aspartate 52. Residue tyrosine 111 coordinates substrate.

The protein belongs to the tRNA pseudouridine synthase TruA family. As to quaternary structure, homodimer.

It carries out the reaction uridine(38/39/40) in tRNA = pseudouridine(38/39/40) in tRNA. In terms of biological role, formation of pseudouridine at positions 38, 39 and 40 in the anticodon stem and loop of transfer RNAs. The polypeptide is tRNA pseudouridine synthase A (Cereibacter sphaeroides (strain KD131 / KCTC 12085) (Rhodobacter sphaeroides)).